The chain runs to 211 residues: Protein-L-isoaspartate O-methyltransferase (211 aa).

The active site involves serine 60.

Belongs to the methyltransferase superfamily. L-isoaspartyl/D-aspartyl protein methyltransferase family.

It is found in the cytoplasm. The catalysed reaction is [protein]-L-isoaspartate + S-adenosyl-L-methionine = [protein]-L-isoaspartate alpha-methyl ester + S-adenosyl-L-homocysteine. Functionally, catalyzes the methyl esterification of L-isoaspartyl residues in peptides and proteins that result from spontaneous decomposition of normal L-aspartyl and L-asparaginyl residues. It plays a role in the repair and/or degradation of damaged proteins. The chain is Protein-L-isoaspartate O-methyltransferase from Pseudomonas aeruginosa (strain LESB58).